Reading from the N-terminus, the 473-residue chain is Cysteine--tRNA ligase (473 aa).

Zn(2+) is bound at residue Cys-28. The short motif at 30–40 (MTVYDFCHIGH) is the 'HIGH' region element. The Zn(2+) site is built by Cys-212, His-237, and Glu-241. The 'KMSKS' region signature appears at 277-281 (KMSKS). Lys-280 lines the ATP pocket.

It belongs to the class-I aminoacyl-tRNA synthetase family. In terms of assembly, monomer. Zn(2+) is required as a cofactor.

Its subcellular location is the cytoplasm. The enzyme catalyses tRNA(Cys) + L-cysteine + ATP = L-cysteinyl-tRNA(Cys) + AMP + diphosphate. The polypeptide is Cysteine--tRNA ligase (Polynucleobacter asymbioticus (strain DSM 18221 / CIP 109841 / QLW-P1DMWA-1) (Polynucleobacter necessarius subsp. asymbioticus)).